The chain runs to 238 residues: Probable septum site-determining protein MinC (238 aa).

The protein belongs to the MinC family. As to quaternary structure, interacts with MinD and FtsZ.

Its function is as follows. Cell division inhibitor that blocks the formation of polar Z ring septums. Rapidly oscillates between the poles of the cell to destabilize FtsZ filaments that have formed before they mature into polar Z rings. Prevents FtsZ polymerization. The sequence is that of Probable septum site-determining protein MinC from Blochmanniella floridana.